We begin with the raw amino-acid sequence, 565 residues long: Proline--tRNA ligase (565 aa).

Belongs to the class-II aminoacyl-tRNA synthetase family. ProS type 1 subfamily. Homodimer.

It localises to the cytoplasm. The catalysed reaction is tRNA(Pro) + L-proline + ATP = L-prolyl-tRNA(Pro) + AMP + diphosphate. Functionally, catalyzes the attachment of proline to tRNA(Pro) in a two-step reaction: proline is first activated by ATP to form Pro-AMP and then transferred to the acceptor end of tRNA(Pro). As ProRS can inadvertently accommodate and process non-cognate amino acids such as alanine and cysteine, to avoid such errors it has two additional distinct editing activities against alanine. One activity is designated as 'pretransfer' editing and involves the tRNA(Pro)-independent hydrolysis of activated Ala-AMP. The other activity is designated 'posttransfer' editing and involves deacylation of mischarged Ala-tRNA(Pro). The misacylated Cys-tRNA(Pro) is not edited by ProRS. In Bacillus pumilus (strain SAFR-032), this protein is Proline--tRNA ligase.